Here is a 122-residue protein sequence, read N- to C-terminus: Large ribosomal subunit protein uL14 (122 aa).

Belongs to the universal ribosomal protein uL14 family. As to quaternary structure, part of the 50S ribosomal subunit. Forms a cluster with proteins L3 and L19. In the 70S ribosome, L14 and L19 interact and together make contacts with the 16S rRNA in bridges B5 and B8.

Binds to 23S rRNA. Forms part of two intersubunit bridges in the 70S ribosome. This Carboxydothermus hydrogenoformans (strain ATCC BAA-161 / DSM 6008 / Z-2901) protein is Large ribosomal subunit protein uL14.